A 372-amino-acid polypeptide reads, in one-letter code: 18-hydroxynorfluorocurarine reductase (372 aa).

Zn(2+) is bound by residues Cys47, Asp50, His69, Glu70, Cys100, Cys103, Cys106, Cys114, and Cys172. Residues 197-202 (GLGGIG), Lys226, 283-285 (LGA), Ser307, and Arg354 each bind NADP(+).

It belongs to the zinc-containing alcohol dehydrogenase family. As to quaternary structure, homodimer. The cofactor is Zn(2+).

It catalyses the reaction (19E)-cur-19-en-17-al + NADP(+) = norfluorocurarine + NADPH + H(+). The catalysed reaction is 17,18-epoxy-17-hydroxycur-19-ene + NADP(+) = 18-hydroxynorfluorocurarine + NADPH + H(+). It participates in alkaloid biosynthesis. In terms of biological role, alcohol dehydrogenase involved in the biosynthesis of curare monoterpene indole alkaloids (MIAs), natural products such as diaboline, a pharmacologically active compound used to regulate blood pressure. Curare alkaloids act as animal glycine receptor antagonists. Catalyzes the conversion of norfluorocurarine to desoxy Wieland-Gumlich aldehyde, and of 18-OH norfluorocurarine to Wieland-Gumlich aldehyde. The chain is 18-hydroxynorfluorocurarine reductase from Strychnos sp.